The sequence spans 136 residues: MLRTMLHAKIHRATVTRADLHYVGSITLDLDLMEAADILPGELVAVADINNGNRLETYVIAGERGSGVVGINGAAARLVHPGDLVIIMSYVQLPDAEARRHHPRVVFVDAENRIIGTGTDPAEPLPGSGLLSGHHT.

Ser25 acts as the Schiff-base intermediate with substrate; via pyruvic acid in catalysis. Ser25 is modified (pyruvic acid (Ser)). Substrate is bound at residue Thr57. Tyr58 functions as the Proton donor in the catalytic mechanism. Residue 73-75 participates in substrate binding; that stretch reads GAA.

Belongs to the PanD family. In terms of assembly, heterooctamer of four alpha and four beta subunits. Requires pyruvate as cofactor. In terms of processing, is synthesized initially as an inactive proenzyme, which is activated by self-cleavage at a specific serine bond to produce a beta-subunit with a hydroxyl group at its C-terminus and an alpha-subunit with a pyruvoyl group at its N-terminus.

It localises to the cytoplasm. It catalyses the reaction L-aspartate + H(+) = beta-alanine + CO2. The protein operates within cofactor biosynthesis; (R)-pantothenate biosynthesis; beta-alanine from L-aspartate: step 1/1. Functionally, catalyzes the pyruvoyl-dependent decarboxylation of aspartate to produce beta-alanine. The sequence is that of Aspartate 1-decarboxylase from Acidothermus cellulolyticus (strain ATCC 43068 / DSM 8971 / 11B).